A 232-amino-acid polypeptide reads, in one-letter code: Enolase-phosphatase E1 (232 aa).

This sequence belongs to the HAD-like hydrolase superfamily. MasA/MtnC family. In terms of assembly, monomer. The cofactor is Mg(2+).

It catalyses the reaction 5-methylsulfanyl-2,3-dioxopentyl phosphate + H2O = 1,2-dihydroxy-5-(methylsulfanyl)pent-1-en-3-one + phosphate. The protein operates within amino-acid biosynthesis; L-methionine biosynthesis via salvage pathway; L-methionine from S-methyl-5-thio-alpha-D-ribose 1-phosphate: step 3/6. Its pathway is amino-acid biosynthesis; L-methionine biosynthesis via salvage pathway; L-methionine from S-methyl-5-thio-alpha-D-ribose 1-phosphate: step 4/6. In terms of biological role, bifunctional enzyme that catalyzes the enolization of 2,3-diketo-5-methylthiopentyl-1-phosphate (DK-MTP-1-P) into the intermediate 2-hydroxy-3-keto-5-methylthiopentenyl-1-phosphate (HK-MTPenyl-1-P), which is then dephosphorylated to form the acireductone 1,2-dihydroxy-3-keto-5-methylthiopentene (DHK-MTPene). This Xanthomonas campestris pv. campestris (strain 8004) protein is Enolase-phosphatase E1.